Here is a 339-residue protein sequence, read N- to C-terminus: Biotin synthase (339 aa).

Residues 55-282 form the Radical SAM core domain; sequence NAVQLSTLLS…KAVVRLSAGR (228 aa). [4Fe-4S] cluster-binding residues include cysteine 70, cysteine 74, and cysteine 77. [2Fe-2S] cluster is bound by residues cysteine 114, cysteine 145, cysteine 205, and arginine 277.

The protein belongs to the radical SAM superfamily. Biotin synthase family. As to quaternary structure, homodimer. Requires [4Fe-4S] cluster as cofactor. [2Fe-2S] cluster serves as cofactor.

It catalyses the reaction (4R,5S)-dethiobiotin + (sulfur carrier)-SH + 2 reduced [2Fe-2S]-[ferredoxin] + 2 S-adenosyl-L-methionine = (sulfur carrier)-H + biotin + 2 5'-deoxyadenosine + 2 L-methionine + 2 oxidized [2Fe-2S]-[ferredoxin]. Its pathway is cofactor biosynthesis; biotin biosynthesis; biotin from 7,8-diaminononanoate: step 2/2. Functionally, catalyzes the conversion of dethiobiotin (DTB) to biotin by the insertion of a sulfur atom into dethiobiotin via a radical-based mechanism. This Burkholderia ambifaria (strain ATCC BAA-244 / DSM 16087 / CCUG 44356 / LMG 19182 / AMMD) (Burkholderia cepacia (strain AMMD)) protein is Biotin synthase.